The primary structure comprises 276 residues: Undecaprenyl-diphosphatase 2 (276 aa).

Transmembrane regions (helical) follow at residues 1–21 (MSLW…LFPV), 44–64 (QLLP…LWYF), 87–107 (GHLM…GLLL), 114–134 (VFHD…LLWL), 150–170 (MTFK…IPGF), 190–210 (AAEF…VLEL), 222–242 (DALL…RFLM), and 251–271 (LASF…WFML).

It belongs to the UppP family.

The protein localises to the cell inner membrane. It carries out the reaction di-trans,octa-cis-undecaprenyl diphosphate + H2O = di-trans,octa-cis-undecaprenyl phosphate + phosphate + H(+). In terms of biological role, catalyzes the dephosphorylation of undecaprenyl diphosphate (UPP). Confers resistance to bacitracin. This Burkholderia lata (strain ATCC 17760 / DSM 23089 / LMG 22485 / NCIMB 9086 / R18194 / 383) protein is Undecaprenyl-diphosphatase 2.